Consider the following 187-residue polypeptide: Peptidyl-tRNA hydrolase (187 aa).

Tyr15 contributes to the tRNA binding site. The Proton acceptor role is filled by His20. TRNA is bound by residues Phe65, Asn67, and Asn113.

This sequence belongs to the PTH family. As to quaternary structure, monomer.

Its subcellular location is the cytoplasm. It catalyses the reaction an N-acyl-L-alpha-aminoacyl-tRNA + H2O = an N-acyl-L-amino acid + a tRNA + H(+). Hydrolyzes ribosome-free peptidyl-tRNAs (with 1 or more amino acids incorporated), which drop off the ribosome during protein synthesis, or as a result of ribosome stalling. Its function is as follows. Catalyzes the release of premature peptidyl moieties from peptidyl-tRNA molecules trapped in stalled 50S ribosomal subunits, and thus maintains levels of free tRNAs and 50S ribosomes. In Methylococcus capsulatus (strain ATCC 33009 / NCIMB 11132 / Bath), this protein is Peptidyl-tRNA hydrolase.